The sequence spans 241 residues: Xyloglucan-specific endo-beta-1,4-glucanase 1 (241 aa).

The signal sequence occupies residues 1–19; sequence MKGLLAGTIAAATFAVASA. Residue E136 is part of the active site. N174 and N190 each carry an N-linked (GlcNAc...) asparagine glycan. E222 is a catalytic residue.

Belongs to the glycosyl hydrolase 12 (cellulase H) family. Interacts with host apoplastic glucanase inhibitor GIP2.

It carries out the reaction xyloglucan + H2O = xyloglucan oligosaccharides.. With respect to regulation, the xyloglucanase activity is inhibited by the binding of the host apoplastic glucanase inhibitor GIP2. Functionally, glycoside hydrolase that exhibits xyloglucanase activity. Acts as an important virulence factor during P.parasitica infection of its host Nicotiana benthamiana. Also acts as a pathogen-associated molecular pattern (PAMP) in host species, where it can trigger defense responses including cell death. The PAMP activity is independent of its xyloglucanase activity. With paralog XLP1, is required to elevate apoplastic sugar during P.parasitica infection. This Phytophthora nicotianae (strain INRA-310) (Phytophthora parasitica) protein is Xyloglucan-specific endo-beta-1,4-glucanase 1.